Consider the following 427-residue polypeptide: Stabilizer of axonemal microtubules 4 (427 aa).

3 disordered regions span residues 82 to 105 (TSKS…PLPW), 273 to 298 (RTLN…QPPQ), and 314 to 335 (GNKE…SYEQ). Composition is skewed to polar residues over residues 287–298 (ASMSHRSYQPPQ) and 321–332 (FTLNNPSYVRSS).

As to quaternary structure, microtubule inner protein component of sperm flagellar doublet microtubules. Interacts with PPP1CA.

It localises to the cell projection. The protein resides in the cilium. It is found in the cytoplasm. The protein localises to the cytoskeleton. Its subcellular location is the flagellum axoneme. In Mus musculus (Mouse), this protein is Stabilizer of axonemal microtubules 4.